We begin with the raw amino-acid sequence, 253 residues long: MSHFQLEEMLRAGVHFGHLARRWCPKMKPYIFMEKNGVHIIDLQKTLVLADDALNALDAIAQTGREIMFVGTKKQAKQIIAAEATRAGMPFVCERWLGGMLTNFSTIRQSIRRMNSIERMETDGTFDMITKKERLMLAREREKLMRILGGIATMTRLPAALFIVDIKKEHIAIKEARSLGIPIFAMVDTNCDPEQVDYVIPANDDAIRSIQLMVKAVADTVVNARAMKVEQEVLAEMDAPEVDAAEDAAQSAE.

Belongs to the universal ribosomal protein uS2 family.

In Chlorobium luteolum (strain DSM 273 / BCRC 81028 / 2530) (Pelodictyon luteolum), this protein is Small ribosomal subunit protein uS2.